The sequence spans 358 residues: Probable tartrate dehydrogenase/decarboxylase TtuC' (358 aa).

3 residues coordinate Mn(2+): aspartate 222, aspartate 246, and aspartate 250.

This sequence belongs to the isocitrate and isopropylmalate dehydrogenases family. Requires Mg(2+) as cofactor. Mn(2+) is required as a cofactor. K(+) serves as cofactor.

It localises to the cytoplasm. It carries out the reaction tartrate + NAD(+) = 2-hydroxy-3-oxosuccinate + NADH + H(+). The enzyme catalyses (2R,3S)-tartrate + NAD(+) = 2-hydroxy-3-oxosuccinate + NADH + H(+). It catalyses the reaction (2R,3R)-tartrate + NAD(+) = 2-hydroxy-3-oxosuccinate + NADH + H(+). The catalysed reaction is (2R,3R)-tartrate + H(+) = (R)-glycerate + CO2. It carries out the reaction (R)-malate + NAD(+) = pyruvate + CO2 + NADH. Its pathway is carbohydrate acid metabolism; tartrate degradation; 2-hydroxy-3-oxosuccinate from L-tartrate: step 1/1. It participates in carbohydrate acid metabolism; tartrate degradation; 2-hydroxy-3-oxosuccinate from meso-tartrate: step 1/1. The protein operates within carbohydrate acid metabolism; tartrate degradation; D-glycerate from L-tartrate: step 1/1. Functionally, has multiple catalytic activities. Apart from catalyzing the oxidation of (+)-tartrate to oxaloglycolate, also converts meso-tartrate to D-glycerate and catalyzes the oxidative decarboxylation of D-malate to pyruvate. This chain is Probable tartrate dehydrogenase/decarboxylase TtuC' (ttuC'), found in Agrobacterium vitis (Rhizobium vitis).